We begin with the raw amino-acid sequence, 165 residues long: 2-C-methyl-D-erythritol 2,4-cyclodiphosphate synthase (165 aa).

Residues aspartate 13 and histidine 15 each contribute to the a divalent metal cation site. 4-CDP-2-C-methyl-D-erythritol 2-phosphate is bound by residues 13-15 and 39-40; these read DRH and HS. Histidine 47 lines the a divalent metal cation pocket. Residues 61–63 and phenylalanine 141 each bind 4-CDP-2-C-methyl-D-erythritol 2-phosphate; that span reads DIG.

It belongs to the IspF family. As to quaternary structure, homotrimer. The cofactor is a divalent metal cation.

The catalysed reaction is 4-CDP-2-C-methyl-D-erythritol 2-phosphate = 2-C-methyl-D-erythritol 2,4-cyclic diphosphate + CMP. It participates in isoprenoid biosynthesis; isopentenyl diphosphate biosynthesis via DXP pathway; isopentenyl diphosphate from 1-deoxy-D-xylulose 5-phosphate: step 4/6. Its function is as follows. Involved in the biosynthesis of isopentenyl diphosphate (IPP) and dimethylallyl diphosphate (DMAPP), two major building blocks of isoprenoid compounds. Catalyzes the conversion of 4-diphosphocytidyl-2-C-methyl-D-erythritol 2-phosphate (CDP-ME2P) to 2-C-methyl-D-erythritol 2,4-cyclodiphosphate (ME-CPP) with a corresponding release of cytidine 5-monophosphate (CMP). This chain is 2-C-methyl-D-erythritol 2,4-cyclodiphosphate synthase, found in Thermotoga maritima (strain ATCC 43589 / DSM 3109 / JCM 10099 / NBRC 100826 / MSB8).